The sequence spans 76 residues: uncharacterized protein (76 aa).

This is an uncharacterized protein from Treponema pallidum (strain Nichols).